We begin with the raw amino-acid sequence, 511 residues long: Inositol-3-phosphate synthase isozyme 1 (511 aa).

24 residues coordinate NAD(+): glycine 71, glycine 72, asparagine 73, asparagine 74, aspartate 144, isoleucine 181, glutamine 191, arginine 194, threonine 231, alanine 232, asparagine 233, threonine 234, glycine 282, serine 283, aspartate 307, serine 310, asparagine 341, asparagine 342, aspartate 343, lysine 356, alanine 394, aspartate 395, aspartate 423, and serine 424.

Belongs to the myo-inositol 1-phosphate synthase family. In terms of assembly, homotrimer or homotetramer. Interacts with ATXR5 and ATXR6. NAD(+) serves as cofactor. Expressed in siliques, leaves, roots, seed endosperm, but not in embryos. Highest expression in leaves, but restricted to vascular tissue in older leaves.

The protein localises to the cytoplasm. It is found in the cytosol. The protein resides in the nucleus. It catalyses the reaction D-glucose 6-phosphate = 1D-myo-inositol 3-phosphate. It participates in polyol metabolism; myo-inositol biosynthesis; myo-inositol from D-glucose 6-phosphate: step 1/2. Key enzyme in myo-inositol biosynthesis pathway that catalyzes the conversion of glucose 6-phosphate to 1-myo-inositol 1-phosphate in a NAD-dependent manner. Catalyzes the majority of myo-inositol synthesis required for plant growth and development. Acts as a repressor of programmed cell death and protects plant cells against cell death under high light intensity or long days. Controls its own transcription by inhibiting ATXR6 activity. Reduces the deposition of inhibitory histone marks on its own promoter. The protein is Inositol-3-phosphate synthase isozyme 1 (IPS1) of Arabidopsis thaliana (Mouse-ear cress).